The following is a 659-amino-acid chain: Crossover junction endonuclease MUS81 (659 aa).

The Helix-hairpin-helix motif 1 signature appears at 59-78; sequence KDLSQIKGFGKWMVKLMKGY. Positions 404–503 constitute an ERCC4 domain; it reads ILILDDREKF…KKLIYILEGD (100 aa). The Helix-hairpin-helix motif 2 signature appears at 585–622; it reads TISDVFAIQLMQVPQVTEEIAIAVLDMYPTLLSLASAY.

This sequence belongs to the XPF family. In terms of assembly, forms a heterodimer with EME1A or EME1B. It depends on Mg(2+) as a cofactor. Requires Ca(2+) as cofactor. In terms of tissue distribution, ubiquitous but preferentially expressed in young flowers buds, notably in anthers.

Its subcellular location is the nucleus. The protein localises to the nucleolus. In terms of biological role, interacts with EME1 to form a DNA structure-specific endonuclease with substrate preference for branched DNA structures with a 5'-end at the branch nick. Typical substrates include 3'-flap structures, D-loops, replication forks, nicked Holliday junctions and also intact Holliday junctions with a reduced efficiency. May be required in mitosis for the processing of stalled or collapsed replication fork intermediates. Plays a role in DNA repair and in genotoxic stress-induced homologous recombination (HR) in somatic cells. Mediates a subset of meiotic recombination events that are insensitive to crossover interference. Together with SEND1, essential for the resolution of toxic replication structures to ensure genome stability, and to maintain telomere integrity and replication. This is Crossover junction endonuclease MUS81 from Arabidopsis thaliana (Mouse-ear cress).